A 734-amino-acid chain; its full sequence is Homoaconitase, mitochondrial (734 aa).

A mitochondrion-targeting transit peptide spans 1–25 (MGASNLLRFGAVTRISTPLLSRRSL). [4Fe-4S] cluster is bound by residues cysteine 367, cysteine 427, and cysteine 430.

This sequence belongs to the aconitase/IPM isomerase family. The cofactor is [4Fe-4S] cluster.

The protein resides in the mitochondrion. The enzyme catalyses (2R,3S)-homoisocitrate = cis-homoaconitate + H2O. The protein operates within amino-acid biosynthesis; L-lysine biosynthesis via AAA pathway; L-alpha-aminoadipate from 2-oxoglutarate: step 3/5. Catalyzes the reversible hydration of cis-homoaconitate to (2R,3S)-homoisocitrate, a step in the alpha-aminoadipate pathway for lysine biosynthesis. This Mycosarcoma maydis (Corn smut fungus) protein is Homoaconitase, mitochondrial (LYS4).